A 208-amino-acid polypeptide reads, in one-letter code: Thiamine-phosphate synthase (208 aa).

4-amino-2-methyl-5-(diphosphooxymethyl)pyrimidine-binding positions include 37 to 41 (QYREK) and asparagine 73. Mg(2+) contacts are provided by aspartate 74 and aspartate 93. Serine 112 is a 4-amino-2-methyl-5-(diphosphooxymethyl)pyrimidine binding site. A 2-[(2R,5Z)-2-carboxy-4-methylthiazol-5(2H)-ylidene]ethyl phosphate-binding site is contributed by 139–141 (TIS). Lysine 142 is a binding site for 4-amino-2-methyl-5-(diphosphooxymethyl)pyrimidine. Residues glycine 171 and 191–192 (IS) each bind 2-[(2R,5Z)-2-carboxy-4-methylthiazol-5(2H)-ylidene]ethyl phosphate.

This sequence belongs to the thiamine-phosphate synthase family. Mg(2+) serves as cofactor.

The enzyme catalyses 2-[(2R,5Z)-2-carboxy-4-methylthiazol-5(2H)-ylidene]ethyl phosphate + 4-amino-2-methyl-5-(diphosphooxymethyl)pyrimidine + 2 H(+) = thiamine phosphate + CO2 + diphosphate. The catalysed reaction is 2-(2-carboxy-4-methylthiazol-5-yl)ethyl phosphate + 4-amino-2-methyl-5-(diphosphooxymethyl)pyrimidine + 2 H(+) = thiamine phosphate + CO2 + diphosphate. It carries out the reaction 4-methyl-5-(2-phosphooxyethyl)-thiazole + 4-amino-2-methyl-5-(diphosphooxymethyl)pyrimidine + H(+) = thiamine phosphate + diphosphate. Its pathway is cofactor biosynthesis; thiamine diphosphate biosynthesis; thiamine phosphate from 4-amino-2-methyl-5-diphosphomethylpyrimidine and 4-methyl-5-(2-phosphoethyl)-thiazole: step 1/1. Condenses 4-methyl-5-(beta-hydroxyethyl)thiazole monophosphate (THZ-P) and 2-methyl-4-amino-5-hydroxymethyl pyrimidine pyrophosphate (HMP-PP) to form thiamine monophosphate (TMP). This chain is Thiamine-phosphate synthase, found in Listeria welshimeri serovar 6b (strain ATCC 35897 / DSM 20650 / CCUG 15529 / CIP 8149 / NCTC 11857 / SLCC 5334 / V8).